The sequence spans 572 residues: Proline--tRNA ligase (572 aa).

Belongs to the class-II aminoacyl-tRNA synthetase family. ProS type 1 subfamily. Homodimer.

The protein resides in the cytoplasm. The catalysed reaction is tRNA(Pro) + L-proline + ATP = L-prolyl-tRNA(Pro) + AMP + diphosphate. In terms of biological role, catalyzes the attachment of proline to tRNA(Pro) in a two-step reaction: proline is first activated by ATP to form Pro-AMP and then transferred to the acceptor end of tRNA(Pro). As ProRS can inadvertently accommodate and process non-cognate amino acids such as alanine and cysteine, to avoid such errors it has two additional distinct editing activities against alanine. One activity is designated as 'pretransfer' editing and involves the tRNA(Pro)-independent hydrolysis of activated Ala-AMP. The other activity is designated 'posttransfer' editing and involves deacylation of mischarged Ala-tRNA(Pro). The misacylated Cys-tRNA(Pro) is not edited by ProRS. The sequence is that of Proline--tRNA ligase from Yersinia pestis (strain Pestoides F).